The following is a 356-amino-acid chain: Probable cysteine protease RDL6 (356 aa).

Positions 1 to 26 (MGFVRPVCMTILFLLIVFVLSAPSSA) are cleaved as a signal peptide. Positions 27–132 (MDLPATSGGH…RRYVPLAGDQ (106 aa)) are cleaved as a propeptide — activation peptide. N37 and N86 each carry an N-linked (GlcNAc...) asparagine glycan. Cystine bridges form between C154–C195, C188–C229, and C288–C339. C157 is an active-site residue. Catalysis depends on residues H294 and N314.

This sequence belongs to the peptidase C1 family.

In terms of biological role, probable thiol protease. The chain is Probable cysteine protease RDL6 from Arabidopsis thaliana (Mouse-ear cress).